An 89-amino-acid polypeptide reads, in one-letter code: LYR motif-containing protein 4 (89 aa).

Belongs to the complex I LYR family.

It localises to the mitochondrion. It is found in the nucleus. It functions in the pathway cofactor biosynthesis; iron-sulfur cluster biosynthesis. Required for nuclear and mitochondrial iron-sulfur protein biosynthesis. In Danio rerio (Zebrafish), this protein is LYR motif-containing protein 4 (lyrm4).